Reading from the N-terminus, the 111-residue chain is Nucleoid-associated protein Teth39_2199 (111 aa).

Belongs to the YbaB/EbfC family. Homodimer.

The protein localises to the cytoplasm. It is found in the nucleoid. Binds to DNA and alters its conformation. May be involved in regulation of gene expression, nucleoid organization and DNA protection. The chain is Nucleoid-associated protein Teth39_2199 from Thermoanaerobacter pseudethanolicus (strain ATCC 33223 / 39E) (Clostridium thermohydrosulfuricum).